A 215-amino-acid polypeptide reads, in one-letter code: Tail hub protein A (215 aa).

Heterotrimer with THB. The heterotrimers further assemble as 12 docking hubs that anchor the trimeric tail fibers.

The protein localises to the virion. Forms the tail hub together with tail hub protein B (THB). This Bacteroides phage crAss001 (Bacteroides phage PhiCrAss001) protein is Tail hub protein A.